The following is a 389-amino-acid chain: Na(+)/H(+) antiporter NhaA 1 (389 aa).

The next 12 membrane-spanning stretches (helical) occupy residues 12–32 (VLNEAFGGVLLIVCTLLALLV), 62–82 (FLLWINDGLISIFFFAIGLEL), 97–117 (IVLPFMAALGGILIPAMLFVL), 128–148 (GWAIPTATDTAFALAILMMCG), 157–177 (IFLLSLAIFDDVGAILIIAIF), 184–204 (IVAFVVAGIAILAMLVLNILG), 220–240 (ISVLKSGVHATLAGIITAFFI), 260–280 (FWLAFVILPLFAFANAGVNLS), 282–302 (IDIGAIFSGVSVGIFLGLFVG), 305–325 (AGVFLFSYLAIRFKFAALPQG), 331–351 (LYGVCILTGIGFTMSLFIDGL), and 365–385 (LAILIASFCSGIWGFIYLKFF).

Belongs to the NhaA Na(+)/H(+) (TC 2.A.33) antiporter family.

Its subcellular location is the cell inner membrane. The catalysed reaction is Na(+)(in) + 2 H(+)(out) = Na(+)(out) + 2 H(+)(in). Functionally, na(+)/H(+) antiporter that extrudes sodium in exchange for external protons. This is Na(+)/H(+) antiporter NhaA 1 from Campylobacter jejuni subsp. jejuni serotype O:23/36 (strain 81-176).